The following is a 189-amino-acid chain: dCTP deaminase (189 aa).

DCTP-binding positions include 112–117, 136–138, Q157, Y171, and Q181; these read KSTYAR and TLE. The Proton donor/acceptor role is filled by E138.

The protein belongs to the dCTP deaminase family. Homotrimer.

It carries out the reaction dCTP + H2O + H(+) = dUTP + NH4(+). Its pathway is pyrimidine metabolism; dUMP biosynthesis; dUMP from dCTP (dUTP route): step 1/2. In terms of biological role, catalyzes the deamination of dCTP to dUTP. This chain is dCTP deaminase, found in Teredinibacter turnerae (strain ATCC 39867 / T7901).